Consider the following 273-residue polypeptide: Kit ligand (273 aa).

Residues 1 to 25 (MKKTQTWILTCIYLQLLLFNPLVKT) form the signal peptide. Over 26 to 214 (EGICRNRVTN…KNPPGDSSLH (189 aa)) the chain is Extracellular. 2 cysteine pairs are disulfide-bonded: cysteine 29/cysteine 114 and cysteine 68/cysteine 163. N-linked (GlcNAc...) asparagine; partial glycosylation is found at asparagine 90 and asparagine 118. Asparagine 145 is a glycosylation site (N-linked (GlcNAc...) asparagine). An O-linked (GalNAc...) serine glycan is attached at serine 167. O-linked (GalNAc...) threonine glycosylation is found at threonine 168 and threonine 180. Asparagine 195 carries N-linked (GlcNAc...) asparagine glycosylation. The chain crosses the membrane as a helical span at residues 215 to 237 (WAAMALPALFSLIIGFAFGALYW). Over 238–273 (KKRQPSLTRAVENIQINEEDNEISMLQEKEREFQEV) the chain is Cytoplasmic.

This sequence belongs to the SCF family. Homodimer, non-covalently linked. Heterotetramer with KIT, binding two KIT molecules; thereby mediates KIT dimerization and subsequent activation by autophosphorylation. In terms of processing, a soluble form (sKITLG) is produced by proteolytic processing of isoform 1 in the extracellular domain. Post-translationally, found in two differentially glycosylated forms, LMW-SCF and HMW-SCF. LMW-SCF is fully N-glycosylated at Asn-145, partially N-glycosylated at Asn-90, O-glycosylated at Ser-167, Thr-168 and Thr-180, and not glycosylated at Asn-97 or Asn-118. HMW-SCF is N-glycosylated at Asn-118, Asn-90 and Asn-145, O-glycosylated at Ser-167, Thr-168 and Thr-180, and not glycosylated at Asn-97. A soluble form exists as a cleavage product of the extracellular domain.

Its subcellular location is the cell membrane. It localises to the cytoplasm. It is found in the cytoskeleton. The protein resides in the cell projection. The protein localises to the lamellipodium. Its subcellular location is the filopodium. It localises to the secreted. Functionally, ligand for the receptor-type protein-tyrosine kinase KIT. Plays an essential role in the regulation of cell survival and proliferation, hematopoiesis, stem cell maintenance, gametogenesis, mast cell development, migration and function, and in melanogenesis. KITLG/SCF binding can activate several signaling pathways. Promotes phosphorylation of PIK3R1, the regulatory subunit of phosphatidylinositol 3-kinase, and subsequent activation of the kinase AKT1. KITLG/SCF and KIT also transmit signals via GRB2 and activation of RAS, RAF1 and the MAP kinases MAPK1/ERK2 and/or MAPK3/ERK1. KITLG/SCF and KIT promote activation of STAT family members STAT1, STAT3 and STAT5. KITLG/SCF and KIT promote activation of PLCG1, leading to the production of the cellular signaling molecules diacylglycerol and inositol 1,4,5-trisphosphate. KITLG/SCF acts synergistically with other cytokines, probably interleukins. The sequence is that of Kit ligand from Homo sapiens (Human).